The following is a 545-amino-acid chain: MAKDLKFSEDARRAMLRGVDTLADAVKVTLGPKGRNVVLDKKFGSPLITNDGVTIAKEIELEDAFENMGAQLVSEVASKTNDVAGDGTTTATVLAQAMIREGLKNVTSGANPVGIRRGIEKAVELAVQELKGISQPIESKEAISQIAAVSSGDEEVGQLIAEAMERVGNDGVITIEESKGFNTELEVVEGMQFDRGYASPYMVTDQDKMEAVLEDPYILITDKKIGNIQEVLPVLEQVVQQGKPLLMIAEDVEGEALATLVVNKLRGTFNAVAVKAPGFGDRRKAMLEDIAVLTGAEVITEDLGLDLKSASIDQLGRASKVVVTKENTTVVEGSGDPEAISSRVAQIRAQAEESTSDFDKEKLQERLAKLAGGVAVIKVGAATETELKERKLRIEDALNSTRAGVEEGMVPGGGTALVNIHRQVSELTLEGDEATGASIVLRALEEPVRQIVHNAGLEGSIIVERLKGEKVGIGYNAATDEWVNMVEAGIVDPTKVTRSALQNAASVAAMFLTTEAVVADKPEENGGAGGGMPDMGGMGGMGGMM.

ATP-binding positions include 29–32 (TLGP), 86–90 (DGTTT), Gly413, 476–478 (NAA), and Asp492.

Belongs to the chaperonin (HSP60) family. In terms of assembly, forms a cylinder of 14 subunits composed of two heptameric rings stacked back-to-back. Interacts with the co-chaperonin GroES.

It localises to the cytoplasm. The catalysed reaction is ATP + H2O + a folded polypeptide = ADP + phosphate + an unfolded polypeptide.. Functionally, together with its co-chaperonin GroES, plays an essential role in assisting protein folding. The GroEL-GroES system forms a nano-cage that allows encapsulation of the non-native substrate proteins and provides a physical environment optimized to promote and accelerate protein folding. In Oceanobacillus iheyensis (strain DSM 14371 / CIP 107618 / JCM 11309 / KCTC 3954 / HTE831), this protein is Chaperonin GroEL.